Here is a 679-residue protein sequence, read N- to C-terminus: Methionine--tRNA ligase (679 aa).

The short motif at 12–22 (PYANGPIHIGH) is the 'HIGH' region element. Residues Cys143, Cys146, Cys156, and Cys158 each contribute to the Zn(2+) site. The short motif at 328–332 (KMSKS) is the 'KMSKS' region element. Lys331 contacts ATP. Residues 537–564 (MMEESKDEAAQETGAAATNPFNDSDQPL) are disordered. The tRNA-binding domain maps to 577–679 (DFMKVDLRVA…EGALPGQRVH (103 aa)).

It belongs to the class-I aminoacyl-tRNA synthetase family. MetG type 1 subfamily. In terms of assembly, homodimer. It depends on Zn(2+) as a cofactor.

The protein localises to the cytoplasm. It carries out the reaction tRNA(Met) + L-methionine + ATP = L-methionyl-tRNA(Met) + AMP + diphosphate. In terms of biological role, is required not only for elongation of protein synthesis but also for the initiation of all mRNA translation through initiator tRNA(fMet) aminoacylation. The sequence is that of Methionine--tRNA ligase from Rhodopirellula baltica (strain DSM 10527 / NCIMB 13988 / SH1).